Reading from the N-terminus, the 275-residue chain is N-(5'-phosphoribosyl)anthranilate isomerase 1, chloroplastic (275 aa).

The transit peptide at 1–32 directs the protein to the chloroplast; that stretch reads MSTGISTDLHVHFGALNFSKTYKSGLSNRTVS.

It belongs to the TrpF family. In terms of tissue distribution, expressed in roots and shoots.

It localises to the plastid. The protein localises to the chloroplast. The enzyme catalyses N-(5-phospho-beta-D-ribosyl)anthranilate = 1-(2-carboxyphenylamino)-1-deoxy-D-ribulose 5-phosphate. The protein operates within amino-acid biosynthesis; L-tryptophan biosynthesis; L-tryptophan from chorismate: step 3/5. In terms of biological role, catalyzes the conversion of 5-phosphoribosylanthranilate to l-(O-carboxyphenylamino)-l-deoxyribulose-5-phosphate, which is the third step of the tryptophan biosynthetic pathway. The chain is N-(5'-phosphoribosyl)anthranilate isomerase 1, chloroplastic (PAI1) from Arabidopsis thaliana (Mouse-ear cress).